The sequence spans 225 residues: Endoglucanase (225 aa).

The N-terminal stretch at 1–15 (MKVFVVLAAIVAIAN) is a signal peptide. Catalysis depends on D29, which acts as the Nucleophile. 7 disulfide bridges follow: C30/C152, C31/C66, C35/C103, C50/C74, C104/C219, C106/C209, and C176/C187. N55 is a glycosylation site (N-linked (GlcNAc...) asparagine). The active-site Proton donor is D138.

Belongs to the glycosyl hydrolase 45 (cellulase K) family. Post-translationally, N- and O-glycosylated. Contains hybrid- and complex-type N-glycans.

It is found in the secreted. The enzyme catalyses Endohydrolysis of (1-&gt;4)-beta-D-glucosidic linkages in cellulose, lichenin and cereal beta-D-glucans.. With respect to regulation, activity is not affected by metal ions except Mn(2+), which reduces the activity by 40-50%. However, no significant change in activity in response to 1 mM EDTA. Hydrolyzes carboxymethylcellulose (CMC). Also hydrolyzes lichenan and barley beta-1,4-D-glucan. CMC is hydrolyzed majorily to cellobiose (G2), cellotriose (G3) and cellotetraose (G4). Cellohexaose (G6) is hydrolyzed to G4 and G2 with traces of G3. Cellopentaose (G5) is completely hydrolyzed to G2 and G3, and G4 is partially hydrolyzed to G2. Does not hydrolyze G2 or G3. Does not hydrolyze crystalline cellulose, soluble starch, xylan, mannan or laminarin. This chain is Endoglucanase, found in Cryptopygus antarcticus (Antarctic springtail).